A 190-amino-acid polypeptide reads, in one-letter code: Nucleoside triphosphate pyrophosphatase (190 aa).

Asp-69 (proton acceptor) is an active-site residue.

It belongs to the Maf family. Requires a divalent metal cation as cofactor.

The protein resides in the cytoplasm. The enzyme catalyses a ribonucleoside 5'-triphosphate + H2O = a ribonucleoside 5'-phosphate + diphosphate + H(+). It carries out the reaction a 2'-deoxyribonucleoside 5'-triphosphate + H2O = a 2'-deoxyribonucleoside 5'-phosphate + diphosphate + H(+). Its function is as follows. Nucleoside triphosphate pyrophosphatase. May have a dual role in cell division arrest and in preventing the incorporation of modified nucleotides into cellular nucleic acids. The chain is Nucleoside triphosphate pyrophosphatase from Helicobacter pylori (strain ATCC 700392 / 26695) (Campylobacter pylori).